Consider the following 252-residue polypeptide: Coenzyme F420:L-glutamate ligase (252 aa).

GTP-binding positions include 12-15 (VPLE), 44-45 (HT), and Lys49. Asp114 lines the a divalent metal cation pocket. Asn117 contributes to the GTP binding site. A divalent metal cation contacts are provided by Asp155, Thr156, and Gln213. A GTP-binding site is contributed by 211–218 (MGQADEGT).

Belongs to the CofE family. Homodimer. Mg(2+) serves as cofactor. Mn(2+) is required as a cofactor. The cofactor is K(+).

The catalysed reaction is oxidized coenzyme F420-0 + GTP + L-glutamate = oxidized coenzyme F420-1 + GDP + phosphate + H(+). The enzyme catalyses oxidized coenzyme F420-1 + GTP + L-glutamate = oxidized coenzyme F420-2 + GDP + phosphate + H(+). The protein operates within cofactor biosynthesis; coenzyme F420 biosynthesis. Functionally, catalyzes the GTP-dependent successive addition of two or more gamma-linked L-glutamates to the L-lactyl phosphodiester of 7,8-didemethyl-8-hydroxy-5-deazariboflavin (F420-0) to form coenzyme F420-0-glutamyl-glutamate (F420-2) or polyglutamated F420 derivatives. This chain is Coenzyme F420:L-glutamate ligase, found in Methanopyrus kandleri (strain AV19 / DSM 6324 / JCM 9639 / NBRC 100938).